We begin with the raw amino-acid sequence, 724 residues long: Cyclin-T1 (724 aa).

At serine 117 the chain carries Phosphoserine. The short motif at 253 to 270 (KRIRNWRAYQAAMKTKPD) is the Nuclear localization signal element. A Glycyl lysine isopeptide (Lys-Gly) (interchain with G-Cter in SUMO2) cross-link involves residue lysine 342. Positions 384-425 (SAKVSLKEYRAKHAEELAAQKRQLENMEANVKSQYAYAAQNL) form a coiled coil. At serine 388 the chain carries Phosphoserine. Position 390 is an N6-acetyllysine (lysine 390). Lysine 415 is covalently cross-linked (Glycyl lysine isopeptide (Lys-Gly) (interchain with G-Cter in SUMO2)). 3 positions are modified to ADP-ribosylserine: serine 416, serine 473, and serine 474. The tract at residues 479–549 (IKMRIKVHSA…RPSDPKHSSQ (71 aa)) is histidine-rich domain (HRD). Residue lysine 480 forms a Glycyl lysine isopeptide (Lys-Gly) (interchain with G-Cter in SUMO2) linkage. Residues 483 to 507 (IKVHSAGDKHNSIEDSVTKSREHKE) show a composition bias toward basic and acidic residues. 2 disordered regions span residues 483–586 (IKVH…VFDH) and 691–724 (PRAG…PLPK). An N6-(ADP-ribosyl)lysine modification is found at lysine 484. At histidine 486 the chain carries ADP-ribosylhistidine. Serine 494 and serine 498 each carry phosphoserine. Basic residues predominate over residues 508-529 (KQRTHPSNHHHHHNHHSHRHSH). An ADP-ribosylhistidine modification is found at histidine 529. Serine 548 and serine 551 each carry ADP-ribosylserine. At histidine 555 the chain carries ADP-ribosylhistidine. Residues 559–569 (SLSSTLSSSSS) are compositionally biased toward low complexity. Position 562 is an ADP-ribosylserine (serine 562). A compositionally biased stretch (pro residues) spans 708 to 724 (PPPLPSEPPPPLPPLPK).

Belongs to the cyclin family. Cyclin C subfamily. Cyclin-T1 is the predominant cyclin that associates with CDK9 to form a heterodimer called P-TEFb. P-TEFb forms a complex with AFF4/AF5Q31. Component of a complex which is at least composed of HTATSF1/Tat-SF1, P-TEFb complex, RNA pol II, SUPT5H, and NCL/nucleolin. Component of the 7SK snRNP complex at least composed of P-TEFb (composed of CDK9 and CCNT1/cyclin-T1), HEXIM1, HEXIM2, BCDIN3, SART3 proteins and 7SK and U6 snRNAs. Interacts (via central region) with ZMYND8 (via N-terminus); the interaction is direct and the association appears to occur between homodimeric ZMYND8 and the activated form of the P-TEFb complex. Interacts with BRD4, targets chromatin binding. Interacts with JMJD6. Interacts with MDFIC. Interacts with HSF1. Interacts with HTATSF1. Interacts with TBX21. ADP-ribosylation on serine residues by PARP1 in response to DNA damage disrupts the phase separation activity of CCNT1, thereby preventing activation of CDK9.

The protein resides in the nucleus. Regulatory subunit of the cyclin-dependent kinase pair (CDK9/cyclin-T1) complex, also called positive transcription elongation factor B (P-TEFb), which facilitates the transition from abortive to productive elongation by phosphorylating the CTD (C-terminal domain) of the large subunit of RNA polymerase II (RNA Pol II). Required to activate the protein kinase activity of CDK9: acts by mediating formation of liquid-liquid phase separation (LLPS) that enhances binding of P-TEFb to the CTD of RNA Pol II. The chain is Cyclin-T1 (Ccnt1) from Mus musculus (Mouse).